The following is a 187-amino-acid chain: Large ribosomal subunit protein uL22A (187 aa).

Belongs to the universal ribosomal protein uL22 family. As to quaternary structure, component of the large ribosomal subunit (LSU). Mature yeast ribosomes consist of a small (40S) and a large (60S) subunit. The 40S small subunit contains 1 molecule of ribosomal RNA (18S rRNA) and at least 33 different proteins. The large 60S subunit contains 3 rRNA molecules (25S, 5.8S and 5S rRNA) and at least 46 different proteins. uL22 is associated with the polypeptide exit tunnel.

The protein resides in the cytoplasm. Its function is as follows. Component of the ribosome, a large ribonucleoprotein complex responsible for the synthesis of proteins in the cell. The small ribosomal subunit (SSU) binds messenger RNAs (mRNAs) and translates the encoded message by selecting cognate aminoacyl-transfer RNA (tRNA) molecules. The large subunit (LSU) contains the ribosomal catalytic site termed the peptidyl transferase center (PTC), which catalyzes the formation of peptide bonds, thereby polymerizing the amino acids delivered by tRNAs into a polypeptide chain. The nascent polypeptides leave the ribosome through a tunnel in the LSU and interact with protein factors that function in enzymatic processing, targeting, and the membrane insertion of nascent chains at the exit of the ribosomal tunnel. The polypeptide is Large ribosomal subunit protein uL22A (rpl1701) (Schizosaccharomyces pombe (strain 972 / ATCC 24843) (Fission yeast)).